The sequence spans 357 residues: Fulicin peptides (357 aa).

The signal sequence occupies residues 1–17 (MQPTVLLILMTSCLTYQ). Positions 18 to 119 (VIADKPKGNH…VDGSQGHLEP (102 aa)) are excised as a propeptide. At asparagine 123 the chain carries D-asparagine. Valine 126 is modified (valine amide). The propeptide occupies 130 to 194 (NTLPEEAGSF…YNTMNEDEAS (65 aa)). 2 positions are modified to valine amide: valine 201 and valine 209. Residues leucine 217 and leucine 226 each carry the leucine amide modification. Isoleucine amide occurs at positions 233 and 242. A valine amide mark is found at valine 250 and valine 259. Residues 263-298 (NQGVFTVSPSSTKISFDDNYLPYLSSVDAGDLSDVN) constitute a propeptide that is removed on maturation. Position 305 is a leucine amide (leucine 305). A propeptide spanning residues 311–357 (TAEQDETSQRSNERLVALLQNTGFRKRLSRMLQNQRLVEHYPEFIGK) is cleaved from the precursor.

As to expression, found in central ganglia and the ventricles and atria of the heart.

Functionally, potentiates tetanic contraction of the penis retractor muscle at very low concentrations, and also shows modulatory actions on the activity of the buccal and ventricular muscles and the central ganglionic neurons. The polypeptide is Fulicin peptides (Lissachatina fulica (Giant African land snail)).